A 346-amino-acid polypeptide reads, in one-letter code: Phosphate acyltransferase (346 aa).

The protein belongs to the PlsX family. Homodimer. Probably interacts with PlsY.

Its subcellular location is the cytoplasm. The enzyme catalyses a fatty acyl-[ACP] + phosphate = an acyl phosphate + holo-[ACP]. Its pathway is lipid metabolism; phospholipid metabolism. Its function is as follows. Catalyzes the reversible formation of acyl-phosphate (acyl-PO(4)) from acyl-[acyl-carrier-protein] (acyl-ACP). This enzyme utilizes acyl-ACP as fatty acyl donor, but not acyl-CoA. The sequence is that of Phosphate acyltransferase from Brucella abortus (strain S19).